A 182-amino-acid chain; its full sequence is Ribulose bisphosphate carboxylase small subunit, chloroplastic 5 (182 aa).

The N-terminal 49 residues, 1–49, are a transit peptide targeting the chloroplast; sequence MASSLMSNAATTMAAATTTAQANMVAPFNGLKSISAFPVTRKNNDITSV.

This sequence belongs to the RuBisCO small chain family. As to quaternary structure, heterohexadecamer of 8 large and 8 small subunits.

It is found in the plastid. It localises to the chloroplast. RuBisCO catalyzes two reactions: the carboxylation of D-ribulose 1,5-bisphosphate, the primary event in carbon dioxide fixation, as well as the oxidative fragmentation of the pentose substrate. Both reactions occur simultaneously and in competition at the same active site. Although the small subunit is not catalytic it is essential for maximal activity. The sequence is that of Ribulose bisphosphate carboxylase small subunit, chloroplastic 5 from Mesembryanthemum crystallinum (Common ice plant).